The chain runs to 406 residues: Tryptophan synthase beta chain (406 aa).

Lysine 99 is subject to N6-(pyridoxal phosphate)lysine.

It belongs to the TrpB family. In terms of assembly, tetramer of two alpha and two beta chains. It depends on pyridoxal 5'-phosphate as a cofactor.

The catalysed reaction is (1S,2R)-1-C-(indol-3-yl)glycerol 3-phosphate + L-serine = D-glyceraldehyde 3-phosphate + L-tryptophan + H2O. The protein operates within amino-acid biosynthesis; L-tryptophan biosynthesis; L-tryptophan from chorismate: step 5/5. In terms of biological role, the beta subunit is responsible for the synthesis of L-tryptophan from indole and L-serine. Essential for production of nod factors and establishment of symbiosis. This Rhizobium etli (strain ATCC 51251 / DSM 11541 / JCM 21823 / NBRC 15573 / CFN 42) protein is Tryptophan synthase beta chain.